We begin with the raw amino-acid sequence, 357 residues long: 3'-hydroxy-N-methyl-(S)-coclaurine 4'-O-methyltransferase 2 (357 aa).

An S-adenosyl-L-methionine-binding site is contributed by aspartate 226. Catalysis depends on histidine 264, which acts as the Proton acceptor.

Belongs to the class I-like SAM-binding methyltransferase superfamily. Cation-independent O-methyltransferase family. COMT subfamily. Homodimer. In terms of tissue distribution, expressed in roots, stems, leaves and flowers.

It carries out the reaction (S)-3'-hydroxy-N-methylcoclaurine + S-adenosyl-L-methionine = (S)-reticuline + S-adenosyl-L-homocysteine + H(+). It functions in the pathway alkaloid biosynthesis; (S)-reticuline biosynthesis; (S)-reticuline from (S)-norcoclaurine: step 4/4. Involved in the biosynthesis of benzylisoquinoline alkaloids. Catalyzes the transfer of the methyl group to the 4'-hydroxyl group of 3'-hydroxy-N-methylcoclaurine to form reticuline. Can also use laudanosoline and, with a lower activity, 6-O-methylnorlaudanosoline and norlaudanosoline as substrates. Also involved in the papaverine biosynthesis. The polypeptide is 3'-hydroxy-N-methyl-(S)-coclaurine 4'-O-methyltransferase 2 (Papaver somniferum (Opium poppy)).